A 200-amino-acid polypeptide reads, in one-letter code: Large ribosomal subunit protein uL4 (200 aa).

Residues G38–P75 are disordered.

The protein belongs to the universal ribosomal protein uL4 family. Part of the 50S ribosomal subunit.

Its function is as follows. One of the primary rRNA binding proteins, this protein initially binds near the 5'-end of the 23S rRNA. It is important during the early stages of 50S assembly. It makes multiple contacts with different domains of the 23S rRNA in the assembled 50S subunit and ribosome. Forms part of the polypeptide exit tunnel. This Azotobacter vinelandii (strain DJ / ATCC BAA-1303) protein is Large ribosomal subunit protein uL4.